The primary structure comprises 217 residues: 3,4-dihydroxy-2-butanone 4-phosphate synthase (217 aa).

Residues 37–38, aspartate 42, 150–154, and glutamate 174 each bind D-ribulose 5-phosphate; these read RE and RQGHT. Glutamate 38 serves as a coordination point for Mg(2+). Histidine 153 serves as a coordination point for Mg(2+).

It belongs to the DHBP synthase family. In terms of assembly, homodimer. It depends on Mg(2+) as a cofactor. Requires Mn(2+) as cofactor.

It catalyses the reaction D-ribulose 5-phosphate = (2S)-2-hydroxy-3-oxobutyl phosphate + formate + H(+). Its pathway is cofactor biosynthesis; riboflavin biosynthesis; 2-hydroxy-3-oxobutyl phosphate from D-ribulose 5-phosphate: step 1/1. Catalyzes the conversion of D-ribulose 5-phosphate to formate and 3,4-dihydroxy-2-butanone 4-phosphate. In Photorhabdus laumondii subsp. laumondii (strain DSM 15139 / CIP 105565 / TT01) (Photorhabdus luminescens subsp. laumondii), this protein is 3,4-dihydroxy-2-butanone 4-phosphate synthase.